Here is a 411-residue protein sequence, read N- to C-terminus: Adherens junction-associated protein 1 (411 aa).

The N-terminal stretch at 1-43 is a signal peptide; the sequence is MWIQQLLGLSSMSIRWPGRPLGSHAWILIAMFQLAVDLPACEA. At 44–282 the chain is on the extracellular side; the sequence is LGPGPEFWLL…GEASGLAVHQ (239 aa). Disordered regions lie at residues 89 to 108, 115 to 197, and 239 to 268; these read IHGQ…RDQA, AGLA…SNTF, and SLDP…VTQP. Over residues 115-146 the composition is skewed to low complexity; it reads AGLAKPPAAAKSSPSLASSSSSSSSAVAGGAP. Residues 166 to 178 show a composition bias toward polar residues; the sequence is SFDSRGSRPTTET. The span at 247-263 shows a compositional bias: low complexity; that stretch reads PGGVSTTEPSTSPSNNG. Residues 283-303 traverse the membrane as a helical segment; sequence IITITVSLIMVIAALITTLVL. The tract at residues 303–411 is targeting signals; it reads LKNCCAQSGN…VSEKWFEISC (109 aa). At 304 to 411 the chain is on the cytoplasmic side; it reads KNCCAQSGNT…VSEKWFEISC (108 aa). The segment at 311–330 is disordered; that stretch reads GNTRRNSHQRKTNQQEESCQ.

In terms of assembly, forms a complex with CDH1 and CTNNB1; interacts directly with CTNNB1. Interacts with AP1M2. Interacts with isoform 2 of BSG/CD147. Thr-237 and Ser-239 may be phosphorylated; however as this position is probably extracellular, the in vivo relevance is not proven. Expressed in uterus and pancreas (at protein level).

It is found in the basolateral cell membrane. The protein resides in the apical cell membrane. The protein localises to the cell junction. Its subcellular location is the adherens junction. Functionally, plays a role in cell adhesion and cell migration. The polypeptide is Adherens junction-associated protein 1 (AJAP1) (Homo sapiens (Human)).